The primary structure comprises 106 residues: UPF0145 protein PP_2873 (106 aa).

It belongs to the UPF0145 family.

This is UPF0145 protein PP_2873 from Pseudomonas putida (strain ATCC 47054 / DSM 6125 / CFBP 8728 / NCIMB 11950 / KT2440).